Reading from the N-terminus, the 230-residue chain is MTPLRQLISLLHLASPALPIGGFSYSQGLEAAIDIGCVRDADTAERWIRDSLLYVQAQCEAPLWLLLHRGWQAMDVDAVREWNGWFHATRETAELRLETEQMGWSLAKLVGQMGWGGDALREHLAVISPVCLPTAFAATCVALEIDEREGLAAYCFNWAENQVAAAIKAVPLGQVAGQHMLRRLHEAVLMTVDEAVQRAAETPPRLSTFSPMLGLLSSRHETQYSRLFRS.

This sequence belongs to the UreF family. UreD, UreF and UreG form a complex that acts as a GTP-hydrolysis-dependent molecular chaperone, activating the urease apoprotein by helping to assemble the nickel containing metallocenter of UreC. The UreE protein probably delivers the nickel.

The protein resides in the cytoplasm. Functionally, required for maturation of urease via the functional incorporation of the urease nickel metallocenter. The chain is Urease accessory protein UreF from Cupriavidus pinatubonensis (strain JMP 134 / LMG 1197) (Cupriavidus necator (strain JMP 134)).